The chain runs to 2176 residues: Protein eyes shut (2176 aa).

At 1 to 122 the chain is on the cytoplasmic side; the sequence is MSNVHQFDTQ…NPNILLPTLR (122 aa). The helical transmembrane segment at 123-143 threads the bilayer; it reads ILARGLLLPALILAILVGSSQ. One can recognise an EGF-like 1 domain in the interval 144–180; it reads AGFACLSNPCVFGVCIDGLNSSYSCYCIDGYTGIQCQ. Residues 144 to 2176 lie on the Extracellular side of the membrane; the sequence is AGFACLSNPC…DLHGDEPLTV (2033 aa). 21 disulfide bridges follow: C148/C158, C153/C168, C170/C179, C186/C197, C191/C206, C208/C217, C224/C235, C229/C244, C246/C255, C262/C276, C270/C286, C288/C297, C304/C315, C309/C324, C326/C335, C342/C353, C347/C362, C364/C373, C380/C392, C386/C401, and C403/C412. N-linked (GlcNAc...) asparagine glycosylation occurs at N163. Residues 182–218 enclose the EGF-like 2; calcium-binding domain; sequence NWDECWSSPCQNGGTCVDGVAYYNCTCPEGFSGSNCE. The N-linked (GlcNAc...) asparagine glycan is linked to N205. Positions 220-256 constitute an EGF-like 3; calcium-binding domain; that stretch reads NVDECMSNPCQNGGLCRDRTNGYICTCQPGYLGSHCE. In terms of domain architecture, EGF-like 4 spans 258 to 298; it reads DVAVCETGTGARCQHGGECIEGPGLEFTCDCPAGWHGRICQ. The EGF-like 5; calcium-binding domain occupies 300-336; sequence EINECASSPCQNGGVCVDKLAAYACACPMGYTGINCE. The region spanning 338–374 is the EGF-like 6 domain; sequence EILICADNPCQNNALCLMEEGVPTCYCVPDYHGEKCE. One can recognise an EGF-like 7; calcium-binding domain in the interval 376–413; the sequence is QYDECQLGPRCMNGGVCIDGVDTFSCSCPPLLTGMLCE. N-linked (GlcNAc...) asparagine glycosylation occurs at N425. 2 stretches are compositionally biased toward low complexity: residues 429-447 and 482-502; these read PATQSPPRRTTTTSTMAPP and VTSVLSPSSSSSSSEEGVSVE. Disordered regions lie at residues 429-465, 482-639, 757-783, 802-854, and 902-1014; these read PATQSPPRRTTTTSTMAPPTVRPVTPPETTVSPSRAS, VTSV…RPTA, RFTTVQPPAGVTTTSPTEDSSVELPTP, LITT…VEIT, and APPA…GVPE. The segment covering 514–526 has biased composition (polar residues); that stretch reads GSHSISVEQTTAV. A compositionally biased stretch (acidic residues) spans 548 to 560; that stretch reads SASESETETEEEI. 2 stretches are compositionally biased toward low complexity: residues 564–582 and 596–632; these read TTARPPTSRSSSSSEESPS and TSASSESSGEVVTSEEYTTVPHFEVSGSKSESGSEEV. The segment covering 757-775 has biased composition (polar residues); that stretch reads RFTTVQPPAGVTTTSPTED. The span at 811-820 shows a compositional bias: basic residues; it reads THHHHHHHPH. Pro residues-rich tracts occupy residues 904–922 and 930–955; these read PATPAPVPPATTTPPPSPP and TLPPTLPPVTLPPVTQPPPTIPPTPP. Residues 1018-1054 enclose the EGF-like 8 domain; it reads GDVDCIKLGCYNGGTCVTTSEGSRCVCRFDRQGPLCE. Disulfide bonds link C1022/C1033, C1027/C1042, and C1044/C1053. In terms of domain architecture, Laminin G-like 1 spans 1059 to 1266; it reads IRNAAFSGDS…GITECGSLAC (208 aa). 3 N-linked (GlcNAc...) asparagine glycosylation sites follow: N1165, N1170, and N1176. Residues 1309-1346 enclose the EGF-like 9 domain; sequence EISVCEDNPCQYGGTCVQFPGSGYLCLCPLGKHGHYCE. 3 disulfide bridges follow: C1313-C1324, C1318-C1334, and C1336-C1345. Positions 1353–1549 constitute a Laminin G-like 2 domain; that stretch reads LPSFSGSVNG…GVGQCGTREC (197 aa). An N-linked (GlcNAc...) asparagine glycan is attached at N1471. 2 EGF-like domains span residues 1545–1581 and 1583–1621; these read GTRECHRHACQHDGACLQHGATFTCICQEGWYGPLCA and PTNPCDSFNNKCYEDATCVPLVNGYECDCPVGRTGKNCE. Disulfide bonds link C1549/C1560, C1554/C1569, C1571/C1580, C1587/C1600, C1594/C1609, and C1611/C1620. N1665 and N1861 each carry an N-linked (GlcNAc...) asparagine glycan. The region spanning 1692–1879 is the Laminin G-like 3 domain; sequence EKQRSFSPVP…NIRDCDGTAC (188 aa). EGF-like domains lie at 1875 to 1912 and 1913 to 1946; these read DGTACGGDSCESGGHCWLDEKLQPHCICPEYAKGDRCE and YSETCKLIPCKNNGRCLRSGRCSCPNGWGGFYCE. 6 disulfide bridges follow: C1879–C1890, C1884–C1900, C1902–C1911, C1917–C1928, C1922–C1934, and C1936–C1945. Residues 1952–2166 form the Laminin G-like 4 domain; sequence PTTPSFRGNS…TYQGENIGSC (215 aa). N-linked (GlcNAc...) asparagine glycosylation is found at N1994, N2035, and N2099. The segment at 2080–2101 is disordered; sequence GGRSLGSTTPRSTLAGRRKNSS.

The protein belongs to the EYS family. As to expression, expressed from the beginning of rhabdomere biogenesis (48 hours after pupal formation), when it decorates the entire photoreceptor apical surface.

It localises to the membrane. The protein resides in the secreted. Its function is as follows. Essential for the formation of matrix-filled interrhabdomeral space: critical for the formation of epithelial lumina in the retina. Acts together with prominin (prom) and the cell adhesion molecule chaoptin (chp) to choreograph the partitioning of rhabdomeres into an open system. The sequence is that of Protein eyes shut from Drosophila melanogaster (Fruit fly).